We begin with the raw amino-acid sequence, 292 residues long: Small ribosomal subunit protein uS3 (292 aa).

Positions 39–110 (IRLEIMKFLK…KISIKIKEVK (72 aa)) constitute a KH type-2 domain. A disordered region spans residues 247–268 (KANERQSRAALNKKDGLSKDET).

This sequence belongs to the universal ribosomal protein uS3 family. In terms of assembly, part of the 30S ribosomal subunit. Forms a tight complex with proteins S10 and S14.

In terms of biological role, binds the lower part of the 30S subunit head. Binds mRNA in the 70S ribosome, positioning it for translation. The chain is Small ribosomal subunit protein uS3 from Borrelia garinii subsp. bavariensis (strain ATCC BAA-2496 / DSM 23469 / PBi) (Borreliella bavariensis).